We begin with the raw amino-acid sequence, 244 residues long: Uridylate kinase (244 aa).

Lys-17 to Gly-20 contacts ATP. Residue Gly-59 coordinates UMP. ATP-binding residues include Gly-60 and Arg-64. UMP contacts are provided by residues Asp-79 and Thr-140–Thr-147. ATP is bound by residues Thr-167, Tyr-173, and Asp-176.

Belongs to the UMP kinase family. Homohexamer.

It is found in the cytoplasm. It catalyses the reaction UMP + ATP = UDP + ADP. The protein operates within pyrimidine metabolism; CTP biosynthesis via de novo pathway; UDP from UMP (UMPK route): step 1/1. Inhibited by UTP. Functionally, catalyzes the reversible phosphorylation of UMP to UDP. The protein is Uridylate kinase of Hahella chejuensis (strain KCTC 2396).